We begin with the raw amino-acid sequence, 378 residues long: Chaperone protein DnaJ 2 (378 aa).

The J domain occupies 4–68; it reads DYYAVLGVRR…QKKQVYDLGG (65 aa). Residues 130–212 form a CR-type zinc finger; that stretch reads GTTKDIQVDT…CAGDGRVRSR (83 aa). 8 residues coordinate Zn(2+): Cys143, Cys146, Cys160, Cys163, Cys186, Cys189, Cys200, and Cys203. CXXCXGXG motif repeat units follow at residues 143 to 150, 160 to 167, 186 to 193, and 200 to 207; these read CNTCNGEG, CDMCRGRG, CPQCQGFG, and CPECAGDG. Disordered stretches follow at residues 297 to 319 and 351 to 378; these read RPGTQSGQSIPKHGRGVTHLRGG and RGEERPTGQFQPGQQGLFSRLKDAFNGR. The segment covering 358–367 has biased composition (polar residues); it reads GQFQPGQQGL.

The protein belongs to the DnaJ family. Homodimer. Requires Zn(2+) as cofactor.

Its subcellular location is the cytoplasm. In terms of biological role, participates actively in the response to hyperosmotic and heat shock by preventing the aggregation of stress-denatured proteins and by disaggregating proteins, also in an autonomous, DnaK-independent fashion. Unfolded proteins bind initially to DnaJ; upon interaction with the DnaJ-bound protein, DnaK hydrolyzes its bound ATP, resulting in the formation of a stable complex. GrpE releases ADP from DnaK; ATP binding to DnaK triggers the release of the substrate protein, thus completing the reaction cycle. Several rounds of ATP-dependent interactions between DnaJ, DnaK and GrpE are required for fully efficient folding. Also involved, together with DnaK and GrpE, in the DNA replication of plasmids through activation of initiation proteins. The chain is Chaperone protein DnaJ 2 from Streptomyces coelicolor (strain ATCC BAA-471 / A3(2) / M145).